The following is a 659-amino-acid chain: RNA-binding E3 ubiquitin-protein ligase MEX3C (659 aa).

Low complexity predominate over residues 1–15 (MPSGSSAALALAAAP). The segment at 1–140 (MPSGSSAALA…EEAEEEDRSS (140 aa)) is disordered. Pro residues predominate over residues 16–37 (APLPQPPPPPPPPPPPLPPPSG). Over residues 64 to 82 (EPGAPALRAPAAAAQGQAR) the composition is skewed to low complexity. Basic and acidic residues predominate over residues 83-94 (RAAELSPEERAP). Serine 88 carries the post-translational modification Phosphoserine. Acidic residues predominate over residues 104–137 (AELELEEDEEEGEEAELDGDLLEEEELEEAEEED). KH domains are found at residues 232-293 (TTEC…KREI) and 326-387 (QTTV…REEI). The interval 513–569 (FEPVNPLSGFGSDPSGNMKTQRRGSQPSTPRLSPTFPESIEHPLARRVRSDPPSTGN) is disordered. Residues 526 to 544 (PSGNMKTQRRGSQPSTPRL) are compositionally biased toward polar residues. Serine 537 and serine 545 each carry phosphoserine. Basic and acidic residues predominate over residues 551–562 (SIEHPLARRVRS). The segment at 608 to 648 (CVICFENEVIAALVPCGHNLFCMECANKICEKRTPSCPVCQ) adopts an RING-type zinc-finger fold.

Interacts with USP7, which antagonizes the ability to degrade mRNA. Highest levels found in fetal brain and testis. Also expressed in thymus, salivary gland and uterus. Highly expressed in cells of the innate immune system, in particular activated NK cells. Week expression in the intestine.

It localises to the cytoplasm. The protein localises to the nucleus. The enzyme catalyses S-ubiquitinyl-[E2 ubiquitin-conjugating enzyme]-L-cysteine + [acceptor protein]-L-lysine = [E2 ubiquitin-conjugating enzyme]-L-cysteine + N(6)-ubiquitinyl-[acceptor protein]-L-lysine.. E3 ubiquitin ligase responsible for the post-transcriptional regulation of common HLA-A allotypes. Binds to the 3' UTR of HLA-A2 mRNA, and regulates its levels by promoting mRNA decay. RNA binding is sufficient to prevent translation, but ubiquitin ligase activity is required for mRNA degradation. The protein is RNA-binding E3 ubiquitin-protein ligase MEX3C (MEX3C) of Homo sapiens (Human).